Consider the following 363-residue polypeptide: Chorismate synthase (363 aa).

Residues Arg-48 and Arg-54 each contribute to the NADP(+) site. FMN-binding positions include 131 to 133 (RSS), 244 to 245 (NA), Gly-288, 303 to 307 (KPTSS), and Arg-329.

This sequence belongs to the chorismate synthase family. Homotetramer. FMNH2 serves as cofactor.

It carries out the reaction 5-O-(1-carboxyvinyl)-3-phosphoshikimate = chorismate + phosphate. Its pathway is metabolic intermediate biosynthesis; chorismate biosynthesis; chorismate from D-erythrose 4-phosphate and phosphoenolpyruvate: step 7/7. Catalyzes the anti-1,4-elimination of the C-3 phosphate and the C-6 proR hydrogen from 5-enolpyruvylshikimate-3-phosphate (EPSP) to yield chorismate, which is the branch point compound that serves as the starting substrate for the three terminal pathways of aromatic amino acid biosynthesis. This reaction introduces a second double bond into the aromatic ring system. This Maricaulis maris (strain MCS10) (Caulobacter maris) protein is Chorismate synthase.